Here is a 770-residue protein sequence, read N- to C-terminus: Conserved oligomeric Golgi complex subunit 7 (770 aa).

The protein belongs to the COG7 family. As to quaternary structure, component of the conserved oligomeric Golgi complex which is composed of eight different subunits and is required for normal Golgi morphology and localization.

It localises to the golgi apparatus membrane. In terms of biological role, required for normal Golgi function. This Rattus norvegicus (Rat) protein is Conserved oligomeric Golgi complex subunit 7 (Cog7).